A 140-amino-acid chain; its full sequence is Probable deoxyuridine 5'-triphosphate nucleotidohydrolase (140 aa).

Substrate contacts are provided by residues 62-64, 76-79, Arg130, and 135-136; these read RSG, GVID, and FG.

Belongs to the dUTPase family. In terms of assembly, homotrimer. Mg(2+) is required as a cofactor.

It carries out the reaction dUTP + H2O = dUMP + diphosphate + H(+). It functions in the pathway pyrimidine metabolism; dUMP biosynthesis; dUMP from dCTP (dUTP route): step 2/2. Its function is as follows. This enzyme is involved in nucleotide metabolism: it produces dUMP, the immediate precursor of thymidine nucleotides and it decreases the intracellular concentration of dUTP so that uracil cannot be incorporated into DNA. The sequence is that of Probable deoxyuridine 5'-triphosphate nucleotidohydrolase from Schizosaccharomyces pombe (strain 972 / ATCC 24843) (Fission yeast).